Consider the following 58-residue polypeptide: Large ribosomal subunit protein bL32c (58 aa).

This sequence belongs to the bacterial ribosomal protein bL32 family.

It is found in the plastid. The protein localises to the chloroplast. The protein is Large ribosomal subunit protein bL32c (rpl32) of Adiantum capillus-veneris (Maidenhair fern).